The primary structure comprises 1016 residues: MPGKLKVKIVAGRHLPVMDRASDLTDAFVEVKFGNTTFKTDVYLKSLNPQWNSEWFKFEVDDEDLQDEPLQITVLDHDTYSANDAIGKVYIDIDPLLYSEAATVISGWFPIYDTIHGIRGEINVVVKVDLFNDSNRFRQSSCGVKFFCTTSIPKCYRAVVIHGFVEELVVNEDPEYQWIDRIRTPRASNEARQRLISLMSGELQRKIGLKVLEMRGNAVVGYLQCFDLEGESGLVVRAIGTACTLDKLSSPAAFLPACSSPSRELKEIPFNEDPNPNTHSSGPSTPLKNQTYSFSPSKSYSRQSSSSDTDLSLTPKTGMGSGSAGKEGGPFKALLRQQTQSALEQREFPFLTLTAFPPGLLVHVGGVVSARSVKLLDRIHNPDEPETRDAWWAEIRQEIKSHAKALGCHAVVGYSESTSICEEVCILSASGTAAVLNPRFLQEGTVEGCLEQRIEENLPVGCGFCHIPYDELNMPFPAHLTYCYNCRKQKVPDVLFTTIDLPTDAVVVGKGCLIQARLCRLKKKAQAEANATAISNLLPFMEYEVHTQLMNKLKLKGMNALFGLRIQITVGETMLMGLASATGVYLAALPTPGGIQIAGKTPNDGSYEQHISHMQKRINDTIAKNKELYEITPPEVSEEMIGSPIPEPRQRSRLLRSQSESSDEVTELDLSHGKKDAFVLEIDDTDAMEDVHSLLTDAPPPSGFYSCNTEIMPGINNWTSEIQMFTSVRVVRLSSLNLTNQALNKNFNGLCENLLKSLYFKLRSMTPCCLCHVNFTVSLPEDELIQVTVTAVAITFDKNQALQTTKPHVEKSLQRASTDNEELLQFPLELCSDSLPPHPFPAAKEHLESANSNSGIPAAQRAVTVEKASAMGDGNFRNRSAPPCASPTVGVVKMTPLSFIPGAKITKYLGIINMFFIRETTSLREEGGVSGFLHAFIAEVFAMVRAHVAALGGNAVVSYIMKQCVFMENPSKNQAQCLINVSGDAVVFVRDSDLEVMSSQQPAANCQPSCTGEVTT.

Positions 1–109 constitute a C2 domain; sequence MPGKLKVKIV…EAATVISGWF (109 aa). The Ca(2+) site is built by D19, D26, D76, D78, S81, and D84. At S197 the chain carries Phosphoserine; by PKB/AKT2. Residues S200 and S260 each carry the phosphoserine modification. Residues 265–330 are disordered; the sequence is LKEIPFNEDP…SGSAGKEGGP (66 aa). A compositionally biased stretch (polar residues) spans 274-289; it reads PNPNTHSSGPSTPLKN. Over residues 290-318 the composition is skewed to low complexity; the sequence is QTYSFSPSKSYSRQSSSSDTDLSLTPKTG. Phosphoserine is present on residues S293, S295, S304, S305, and S306. At T317 the chain carries Phosphothreonine. The span at 319–328 shows a compositional bias: gly residues; it reads MGSGSAGKEG. The residue at position 323 (S323) is a Phosphoserine. T601 is modified (phosphothreonine). Residues 636–668 are disordered; sequence VSEEMIGSPIPEPRQRSRLLRSQSESSDEVTEL. S643, S657, S659, S661, and S662 each carry phosphoserine. Position 666 is a phosphothreonine (T666). Residues S671, S817, and S869 each carry the phosphoserine modification.

Ca(2+) serves as cofactor. In terms of processing, phosphorylated on Ser-197 by active myristoylated kinase AKT2; insulin-stimulated phosphorylation by AKT2 regulates SLC2A4/GLUT4 translocation into the plasma membrane. Expressed in liver, muscle and fat.

It is found in the cytoplasmic vesicle membrane. The protein resides in the cytoplasm. The protein localises to the cell cortex. Its subcellular location is the cell membrane. It localises to the cell projection. It is found in the ruffle. Required for insulin-stimulated glucose transport and glucose transporter SLC2A4/GLUT4 translocation from intracellular glucose storage vesicle (GSV) to the plasma membrane (PM) in adipocytes. Binds phospholipid membranes in a calcium-dependent manner and is necessary for the optimal membrane fusion between SLC2A4/GLUT4 GSV and the PM. The sequence is that of C2 domain-containing protein 5 (C2cd5) from Mus musculus (Mouse).